We begin with the raw amino-acid sequence, 119 residues long: NADH-quinone oxidoreductase subunit A (119 aa).

A run of 3 helical transmembrane segments spans residues F7–G27, L63–V83, and I88–V108.

It belongs to the complex I subunit 3 family. NDH-1 is composed of 14 different subunits. Subunits NuoA, H, J, K, L, M, N constitute the membrane sector of the complex.

Its subcellular location is the cell membrane. It catalyses the reaction a quinone + NADH + 5 H(+)(in) = a quinol + NAD(+) + 4 H(+)(out). In terms of biological role, NDH-1 shuttles electrons from NADH, via FMN and iron-sulfur (Fe-S) centers, to quinones in the respiratory chain. The immediate electron acceptor for the enzyme in this species is believed to be ubiquinone. Couples the redox reaction to proton translocation (for every two electrons transferred, four hydrogen ions are translocated across the cytoplasmic membrane), and thus conserves the redox energy in a proton gradient. The chain is NADH-quinone oxidoreductase subunit A from Polynucleobacter asymbioticus (strain DSM 18221 / CIP 109841 / QLW-P1DMWA-1) (Polynucleobacter necessarius subsp. asymbioticus).